We begin with the raw amino-acid sequence, 287 residues long: ATP synthase gamma chain (287 aa).

This sequence belongs to the ATPase gamma chain family. In terms of assembly, F-type ATPases have 2 components, CF(1) - the catalytic core - and CF(0) - the membrane proton channel. CF(1) has five subunits: alpha(3), beta(3), gamma(1), delta(1), epsilon(1). CF(0) has three main subunits: a, b and c.

The protein localises to the cell inner membrane. Functionally, produces ATP from ADP in the presence of a proton gradient across the membrane. The gamma chain is believed to be important in regulating ATPase activity and the flow of protons through the CF(0) complex. This is ATP synthase gamma chain from Alkalilimnicola ehrlichii (strain ATCC BAA-1101 / DSM 17681 / MLHE-1).